Here is a 464-residue protein sequence, read N- to C-terminus: GTPase Der (464 aa).

EngA-type G domains follow at residues 3 to 166 and 178 to 351; these read PVIA…PEVE and IRIA…DSAF. GTP is bound by residues 9 to 16, 56 to 60, 118 to 121, 184 to 191, 231 to 235, and 296 to 299; these read GRPNVGKS, DTGGL, NKTD, GRPNAGKS, DTAGV, and NKWD. The region spanning 352–436 is the KH-like domain; the sequence is IKVSTNHLTK…PIRLEFKTGE (85 aa).

The protein belongs to the TRAFAC class TrmE-Era-EngA-EngB-Septin-like GTPase superfamily. EngA (Der) GTPase family. Associates with the 50S ribosomal subunit.

Its function is as follows. GTPase that plays an essential role in the late steps of ribosome biogenesis. In Thioalkalivibrio sulfidiphilus (strain HL-EbGR7), this protein is GTPase Der.